We begin with the raw amino-acid sequence, 368 residues long: MCETARTLPPDIVPITVEEARTLIRHTGGPALDALLDRADAVRRAVHGDEVALCGITNAKSGRCPENCGFCSQSAHFPGADAPVYPLVPAEEMVAQAKVAERAGAREFSIVTSGTRVAKESELATIEEAVRKLRAETAVEPCASLGLVREPELVRLKAAGLMHYHHNLETARSFFENVCTTHTYDEQLETIRAAKRQGLKLCSGGILGMGETPEQRVELAATIRELGIDCVPMNFLNPRPGTPMEHVQAITAEECLAAVAVFRLMMPAAHIFVMGGREVNLGGRQHLIFRAGANGTMVGNYLTSAGRGPGETVRMVEEQGLRLRAPDTGREWAFDGSAPAEAEWNRRAAEPGGKRGLPVVGPPRGGCA.

The 232-residue stretch at 46-277 folds into the Radical SAM core domain; sequence VHGDEVALCG…AAHIFVMGGR (232 aa). C64, C68, and C71 together coordinate [4Fe-4S] cluster. Residues S109, C142, and C202 each contribute to the [2Fe-2S] cluster site. The interval 347 to 368 is disordered; that stretch reads RAAEPGGKRGLPVVGPPRGGCA.

Belongs to the radical SAM superfamily. Biotin synthase family. Homodimer. [4Fe-4S] cluster is required as a cofactor. Requires [2Fe-2S] cluster as cofactor.

The catalysed reaction is (4R,5S)-dethiobiotin + (sulfur carrier)-SH + 2 reduced [2Fe-2S]-[ferredoxin] + 2 S-adenosyl-L-methionine = (sulfur carrier)-H + biotin + 2 5'-deoxyadenosine + 2 L-methionine + 2 oxidized [2Fe-2S]-[ferredoxin]. It functions in the pathway cofactor biosynthesis; biotin biosynthesis; biotin from 7,8-diaminononanoate: step 2/2. Functionally, catalyzes the conversion of dethiobiotin (DTB) to biotin by the insertion of a sulfur atom into dethiobiotin via a radical-based mechanism. The sequence is that of Biotin synthase from Anaeromyxobacter sp. (strain Fw109-5).